A 338-amino-acid chain; its full sequence is Glycerol-3-phosphate dehydrogenase [NAD(P)+] (338 aa).

NADPH is bound by residues S13, W14, and K108. K108, G139, and S141 together coordinate sn-glycerol 3-phosphate. A143 contributes to the NADPH binding site. The sn-glycerol 3-phosphate site is built by K194, D247, S257, R258, and N259. The active-site Proton acceptor is K194. R258 is a binding site for NADPH. The NADPH site is built by V282 and E284.

Belongs to the NAD-dependent glycerol-3-phosphate dehydrogenase family.

Its subcellular location is the cytoplasm. It catalyses the reaction sn-glycerol 3-phosphate + NAD(+) = dihydroxyacetone phosphate + NADH + H(+). The enzyme catalyses sn-glycerol 3-phosphate + NADP(+) = dihydroxyacetone phosphate + NADPH + H(+). It participates in membrane lipid metabolism; glycerophospholipid metabolism. In terms of biological role, catalyzes the reduction of the glycolytic intermediate dihydroxyacetone phosphate (DHAP) to sn-glycerol 3-phosphate (G3P), the key precursor for phospholipid synthesis. This is Glycerol-3-phosphate dehydrogenase [NAD(P)+] from Streptococcus pneumoniae serotype 19F (strain G54).